We begin with the raw amino-acid sequence, 408 residues long: LL-diaminopimelate aminotransferase (408 aa).

The substrate site is built by Tyr-15 and Gly-42. Pyridoxal 5'-phosphate-binding positions include Tyr-72, Ser-108–Lys-109, Tyr-132, Asn-187, Tyr-218, and Ser-246–Ser-248. Substrate contacts are provided by Lys-109, Tyr-132, and Asn-187. The residue at position 249 (Lys-249) is an N6-(pyridoxal phosphate)lysine. Residues Arg-257 and Asn-292 each coordinate pyridoxal 5'-phosphate. Substrate contacts are provided by Asn-292 and Arg-388.

It belongs to the class-I pyridoxal-phosphate-dependent aminotransferase family. LL-diaminopimelate aminotransferase subfamily. In terms of assembly, homodimer. Pyridoxal 5'-phosphate is required as a cofactor.

The catalysed reaction is (2S,6S)-2,6-diaminopimelate + 2-oxoglutarate = (S)-2,3,4,5-tetrahydrodipicolinate + L-glutamate + H2O + H(+). It functions in the pathway amino-acid biosynthesis; L-lysine biosynthesis via DAP pathway; LL-2,6-diaminopimelate from (S)-tetrahydrodipicolinate (aminotransferase route): step 1/1. Its function is as follows. Involved in the synthesis of meso-diaminopimelate (m-DAP or DL-DAP), required for both lysine and peptidoglycan biosynthesis. Catalyzes the direct conversion of tetrahydrodipicolinate to LL-diaminopimelate. In Prochlorococcus marinus (strain MIT 9515), this protein is LL-diaminopimelate aminotransferase.